The primary structure comprises 2560 residues: Plipastatin synthase subunit B (2560 aa).

Residues 7-310 (IQDIYPLSHM…NTVPVRIRSA (304 aa)) are condensation 1. Residues 7 to 1042 (IQDIYPLSHM…AVKLMSLKEH (1036 aa)) form a domain 1 (tyrosine-activating) region. Residues 496 to 889 (TYRQLQVRAN…QAPGVKEAAV (394 aa)) are adenylation 1. In terms of domain architecture, Carrier 1 spans 965–1040 (APRTLIEADL…SMAVKLMSLK (76 aa)). S1000 carries the O-(pantetheine 4'-phosphoryl)serine modification. Residues 1052–1342 (QRDVYPLSFS…NTLAMRSKPE (291 aa)) are condensation 2. The tract at residues 1052–2553 (QRDVYPLSFS…DLTLDELSEI (1502 aa)) is domain 2 (D-allo-threonine-activating). Residues 1527–1927 (TYRDLNEKAE…QYPMIKEAAV (401 aa)) form an adenylation 2 region. In terms of domain architecture, Carrier 2 spans 2006-2080 (SPRNEIETVM…ELSARVRKDV (75 aa)). O-(pantetheine 4'-phosphoryl)serine is present on S2041. The epimerization stretch occupies residues 2088–2553 (VEGEITWTPI…DLTLDELSEI (466 aa)).

Belongs to the ATP-dependent AMP-binding enzyme family. Pantetheine 4'-phosphate is required as a cofactor.

This protein is a multifunctional enzyme, able to activate and polymerize the amino acids Tyr and Thr as part of the biosynthesis of the lipopeptide antibiotic plipastatin. The Thr residue is further converted to the D-allo-isomer form. The activation sites for these amino acids consist of individual domains. The chain is Plipastatin synthase subunit B (ppsB) from Bacillus subtilis (strain 168).